Reading from the N-terminus, the 182-residue chain is Large ribosomal subunit protein bL25 (182 aa).

It belongs to the bacterial ribosomal protein bL25 family. CTC subfamily. As to quaternary structure, part of the 50S ribosomal subunit; part of the 5S rRNA/L5/L18/L25 subcomplex. Contacts the 5S rRNA. Binds to the 5S rRNA independently of L5 and L18.

Its function is as follows. This is one of the proteins that binds to the 5S RNA in the ribosome where it forms part of the central protuberance. This Borrelia duttonii (strain Ly) protein is Large ribosomal subunit protein bL25.